The chain runs to 426 residues: Peptidoglycan DD-endopeptidase ShyB (426 aa).

The signal sequence occupies residues 1 to 21 (MGQFRFLALIVAVLCFSVALF). A compositionally biased stretch (polar residues) spans 32-48 (SYSVPLNQSVNTSQPPS). A disordered region spans residues 32-55 (SYSVPLNQSVNTSQPPSSEMVPSD). Positions 291, 295, and 372 each coordinate Zn(2+).

Belongs to the peptidase M23B family. In terms of assembly, monomer. It depends on Zn(2+) as a cofactor.

Its subcellular location is the periplasm. It functions in the pathway cell wall degradation; peptidoglycan degradation. Its activity is regulated as follows. Not inhibited by metal chelator EDTA. In terms of biological role, cell wall peptidoglycan (PG) DD-endopeptidase, which may act as a substitute for other zinc-dependent PG endopeptidases (ShyA and ShyC) during zinc starvation. Hydrolyzes peptide cross-links which covalently connect adjacent PG strands probably to allow insertion of new glycans and thus cell wall expansion. Degrades purified whole PG sacculi in vitro. It is unclear how it is able to function in low zinc environments, but that may possibly be due to binding zinc with very high affinity, utilizing an alternative metal cofactor or that it may function independently of a bound metal cofactor. This Vibrio cholerae serotype O1 (strain ATCC 39315 / El Tor Inaba N16961) protein is Peptidoglycan DD-endopeptidase ShyB.